Here is a 645-residue protein sequence, read N- to C-terminus: MYQNLAIMIIMLPLASSVINGLFLKVIDTKLAQIIATGFLSLSALFSLVIFCDAGLDGNIIHIKLLPWIEVGNFKVNWSIYIDQLTSIMFIAVTWVSSVVHIYSLGYMAEDKGIIRFLSFLSLFTFFMLMLVSADNFLQLFFGWEGVGVCSYLLIGFWYSKESANKAAIKAFITNRASDFAFILGIITIIVYCGSANYKDVFSSAELLSNTKIFLQFSILDVICLLLFIGCMGKSAQIGLHVWLPDAMEGPTPVSALIHAATMVTAGVFLVARCSYLFEYSPLVLQFITIIGGVTCLFAASIAIMQSDIKKIIAYSTCSQLGYMFMACGVSAYNSGIFHLVTHAFFKALLFLSAGSIIHAVHEQDIFKMGDLRNKMPVTYGNSLIGSLALIGIYPLAGFYSKDSILEAAYSSGSFMFIFGIAAAILTAIYSMKIIMLVFYGKTKLEKDVFEHAHEPAKIMNTPLILLVAGSFFSGMIGYYLLSMDKPNGYFHESLFNLHIYKLLISHPPLYIKLLPMAVGIMGIVIGICVYNSSTIMSFRPSSMSFPRKRESSKPFNLVYNILHNKYYFDEIYNFLIVKPINCLASLFYLGDQKIIDRFGPNGFSRVVNCFSVLTGKTQTGYVFNYALYIVSFIVVVISVFVWKG.

Helical transmembrane passes span 7–27, 31–51, 88–108, 114–134, 137–157, 177–197, 213–233, 252–272, 284–304, 312–332, 337–357, 380–400, 415–435, 464–484, 510–530, and 623–643; these read IMIIMLPLASSVINGLFLKVI, LAQIIATGFLSLSALFSLVIF, IMFIAVTWVSSVVHIYSLGYM, IIRFLSFLSLFTFFMLMLVSA, FLQLFFGWEGVGVCSYLLIGF, ASDFAFILGIITIIVYCGSAN, IFLQFSILDVICLLLFIGCMG, TPVSALIHAATMVTAGVFLVA, VLQFITIIGGVTCLFAASIAI, IIAYSTCSQLGYMFMACGVSA, IFHLVTHAFFKALLFLSAGSI, YGNSLIGSLALIGIYPLAGFY, FMFIFGIAAAILTAIYSMKII, LILLVAGSFFSGMIGYYLLSM, LYIKLLPMAVGIMGIVIGICV, and VFNYALYIVSFIVVVISVFVW.

The protein belongs to the complex I subunit 5 family.

It localises to the cell membrane. It catalyses the reaction a quinone + NADH + 5 H(+)(in) = a quinol + NAD(+) + 4 H(+)(out). NDH-1 shuttles electrons from NADH, via FMN and iron-sulfur (Fe-S) centers, to quinones in the respiratory chain. Couples the redox reaction to proton translocation (for every two electrons transferred, four hydrogen ions are translocated across the cytoplasmic membrane), and thus conserves the redox energy in a proton gradient. In Rickettsia felis (strain ATCC VR-1525 / URRWXCal2) (Rickettsia azadi), this protein is NADH-quinone oxidoreductase subunit L (nuoL).